Here is a 78-residue protein sequence, read N- to C-terminus: Large ribosomal subunit protein bL28 (78 aa).

The disordered stretch occupies residues 1–24 (MSKVCQVTGKRPASGNNVSHAHNK).

It belongs to the bacterial ribosomal protein bL28 family.

This is Large ribosomal subunit protein bL28 from Nitrosococcus oceani (strain ATCC 19707 / BCRC 17464 / JCM 30415 / NCIMB 11848 / C-107).